The chain runs to 488 residues: GlcNAc-binding protein A (488 aa).

The N-terminal stretch at 1-24 (MIMIITKKTLLPVTLALFSSGVMA) is a signal peptide. One can recognise a Chitin-binding type-4 domain in the interval 25 to 202 (HGYVSSVEGG…SFYNVIDVMF (178 aa)). A Chitin-binding type-3 domain is found at 439 to 480 (AGSKVLATDGRIYECKPFPYSGYCIQWSPSATQFEPGVGSDW).

Belongs to the GbpA family.

The protein resides in the secreted. Functionally, probably interacts with GlcNAc residues. May promote attachment to both epithelial cell surfaces and chitin. The chain is GlcNAc-binding protein A from Photobacterium profundum (strain SS9).